A 535-amino-acid polypeptide reads, in one-letter code: Bifunctional purine biosynthesis protein PurH (535 aa).

The 146-residue stretch at 6 to 151 (TRLPVRRALI…KNHKDVAIVV (146 aa)) folds into the MGS-like domain.

It belongs to the PurH family.

The enzyme catalyses (6R)-10-formyltetrahydrofolate + 5-amino-1-(5-phospho-beta-D-ribosyl)imidazole-4-carboxamide = 5-formamido-1-(5-phospho-D-ribosyl)imidazole-4-carboxamide + (6S)-5,6,7,8-tetrahydrofolate. It catalyses the reaction IMP + H2O = 5-formamido-1-(5-phospho-D-ribosyl)imidazole-4-carboxamide. It functions in the pathway purine metabolism; IMP biosynthesis via de novo pathway; 5-formamido-1-(5-phospho-D-ribosyl)imidazole-4-carboxamide from 5-amino-1-(5-phospho-D-ribosyl)imidazole-4-carboxamide (10-formyl THF route): step 1/1. It participates in purine metabolism; IMP biosynthesis via de novo pathway; IMP from 5-formamido-1-(5-phospho-D-ribosyl)imidazole-4-carboxamide: step 1/1. The protein is Bifunctional purine biosynthesis protein PurH of Pseudomonas putida (strain GB-1).